Consider the following 582-residue polypeptide: Membrane-bound O-acyltransferase GUP1 (582 aa).

Residues Met-1–Arg-61 are Extracellular-facing. A helical transmembrane segment spans residues Trp-62–Phe-82. The Cytoplasmic segment spans residues Lys-83–Arg-121. A helical transmembrane segment spans residues Phe-122 to Ile-144. Over Asn-145–Asp-158 the chain is Extracellular. The helical transmembrane segment at Phe-159 to Ile-179 threads the bilayer. Residues His-180–Lys-195 lie on the Cytoplasmic side of the membrane. The chain crosses the membrane as a helical span at residues Leu-196–Gly-216. Over Asn-217–Asn-294 the chain is Extracellular. Residues Ile-295 to Thr-315 traverse the membrane as a helical segment. At Phe-316 to Arg-343 the chain is on the cytoplasmic side. Residues Phe-344 to Ser-364 form a helical membrane-spanning segment. Topologically, residues Lys-365 to Leu-373 are extracellular. The chain crosses the membrane as a helical span at residues Pro-374–Ile-394. Residues Pro-395–Arg-454 lie on the Cytoplasmic side of the membrane. The next 2 membrane-spanning stretches (helical) occupy residues Ile-455–Leu-475 and Leu-476–Phe-496. The active site involves His-469. Residues Lys-497–His-507 lie on the Cytoplasmic side of the membrane. The chain crosses the membrane as a helical span at residues Leu-508–Phe-528. Topologically, residues Cys-529–Gly-548 are extracellular. Residues Val-549–Ile-569 traverse the membrane as a helical segment. The Cytoplasmic portion of the chain corresponds to Arg-570–Cys-582.

The protein belongs to the membrane-bound acyltransferase family.

It is found in the cell membrane. The protein resides in the endoplasmic reticulum membrane. Its subcellular location is the mitochondrion membrane. Functionally, membrane-bound O-acyltransferase involved in the remodeling of glycosylphosphatidylinositol (GPI) anchors. Acts only on GPI-anchored proteins, but not on free GPI lipids. Also involved in lipid metabolism, having profound effects on sphingolipid-sterol-ordered domains integrity and assembly. Involved in cell integrity and apoptosis. The polypeptide is Membrane-bound O-acyltransferase GUP1 (GUP1) (Candida tropicalis (Yeast)).